A 353-amino-acid chain; its full sequence is MTIAIGKSSKEPKDLFDSMDDWLRRDRFVFVGWSGLLLFPCAYFALGGWFTGTTFVTSWYTHGLASSYLEGCNFLTAAVSTPANSLAHSLLLLWGPEAQGDFTRWCQLGGLWTFVALHGSFGLIGFMLRQFELARSVQLRPYNAIAFSGPISVFVSVSLIYPLGQAGWFFAPSFGVAAIFRFILFFQGFHNWTLNPFHMMGVAGVLGAALLCAIHGATVENTLFEDGDGANTFRAFNPTQSEETYSMVTANRFWSQIFGVAFSNKRWLHFFMLFVPVTGLWMSAIGVVGLALNLRAYDFVSQEIRAAEDPEFETFYTKNILLNEGIRAWMAAQDQPHENLVFPEEVLPRGNAL.

Residue Thr-2 is modified to N-acetylthreonine. Thr-2 bears the Phosphothreonine mark. A helical transmembrane segment spans residues 41–61 (CAYFALGGWFTGTTFVTSWYT). Residue His-118 coordinates chlorophyll a. A helical transmembrane segment spans residues 125 to 141 (GFMLRQFELARSVQLRP). Positions 130 and 143 each coordinate pheophytin a. Residues 153–166 (VFVSVSLIYPLGQA) traverse the membrane as a helical segment. Residue His-198 participates in chlorophyll a binding. A helical transmembrane segment spans residues 208-228 (AALLCAIHGATVENTLFEDGD). The a plastoquinone site is built by His-215 and Phe-262. His-215 provides a ligand contact to Fe cation. His-269 lines the Fe cation pocket. Residues 279–295 (GLWMSAIGVVGLALNLR) form a helical membrane-spanning segment.

This sequence belongs to the reaction center PufL/M/PsbA/D family. As to quaternary structure, PSII is composed of 1 copy each of membrane proteins PsbA, PsbB, PsbC, PsbD, PsbE, PsbF, PsbH, PsbI, PsbJ, PsbK, PsbL, PsbM, PsbT, PsbX, PsbY, PsbZ, Psb30/Ycf12, at least 3 peripheral proteins of the oxygen-evolving complex and a large number of cofactors. It forms dimeric complexes. It depends on The D1/D2 heterodimer binds P680, chlorophylls that are the primary electron donor of PSII, and subsequent electron acceptors. It shares a non-heme iron and each subunit binds pheophytin, quinone, additional chlorophylls, carotenoids and lipids. There is also a Cl(-1) ion associated with D1 and D2, which is required for oxygen evolution. The PSII complex binds additional chlorophylls, carotenoids and specific lipids. as a cofactor.

The protein localises to the plastid. It is found in the chloroplast thylakoid membrane. It catalyses the reaction 2 a plastoquinone + 4 hnu + 2 H2O = 2 a plastoquinol + O2. In terms of biological role, photosystem II (PSII) is a light-driven water:plastoquinone oxidoreductase that uses light energy to abstract electrons from H(2)O, generating O(2) and a proton gradient subsequently used for ATP formation. It consists of a core antenna complex that captures photons, and an electron transfer chain that converts photonic excitation into a charge separation. The D1/D2 (PsbA/PsbD) reaction center heterodimer binds P680, the primary electron donor of PSII as well as several subsequent electron acceptors. D2 is needed for assembly of a stable PSII complex. The polypeptide is Photosystem II D2 protein (Angiopteris evecta (Mule's foot fern)).